The sequence spans 307 residues: N-acetylmuramic acid 6-phosphate etherase (307 aa).

The 164-residue stretch at 62–225 folds into the SIS domain; it reads IVAAFQKGGR…TTASMIRIGK (164 aa). The Proton donor role is filled by glutamate 90. Glutamate 121 is an active-site residue.

It belongs to the GCKR-like family. MurNAc-6-P etherase subfamily. In terms of assembly, homodimer.

It carries out the reaction N-acetyl-D-muramate 6-phosphate + H2O = N-acetyl-D-glucosamine 6-phosphate + (R)-lactate. It functions in the pathway amino-sugar metabolism; 1,6-anhydro-N-acetylmuramate degradation. It participates in amino-sugar metabolism; N-acetylmuramate degradation. The protein operates within cell wall biogenesis; peptidoglycan recycling. In terms of biological role, specifically catalyzes the cleavage of the D-lactyl ether substituent of MurNAc 6-phosphate, producing GlcNAc 6-phosphate and D-lactate. Together with AnmK, is also required for the utilization of anhydro-N-acetylmuramic acid (anhMurNAc) either imported from the medium or derived from its own cell wall murein, and thus plays a role in cell wall recycling. The sequence is that of N-acetylmuramic acid 6-phosphate etherase from Rhizobium rhizogenes (strain K84 / ATCC BAA-868) (Agrobacterium radiobacter).